We begin with the raw amino-acid sequence, 326 residues long: ATP synthase subunit b 2 (326 aa).

The chain crosses the membrane as a helical span at residues 2–22; that stretch reads LIDWFTVVAQALNFLILVWLL. Basic and acidic residues-rich tracts occupy residues 275–298 and 306–326; these read QQGRKEGRAVQNWDKAESEIRKEN and PPPEAKAKPKPEEPKPEIGSP. The disordered stretch occupies residues 275 to 326; sequence QQGRKEGRAVQNWDKAESEIRKENLSPAKTEPPPEAKAKPKPEEPKPEIGSP.

Belongs to the ATPase B chain family. F-type ATPases have 2 components, F(1) - the catalytic core - and F(0) - the membrane proton channel. F(1) has five subunits: alpha(3), beta(3), gamma(1), delta(1), epsilon(1). F(0) has three main subunits: a(1), b(2) and c(10-14). The alpha and beta chains form an alternating ring which encloses part of the gamma chain. F(1) is attached to F(0) by a central stalk formed by the gamma and epsilon chains, while a peripheral stalk is formed by the delta and b chains.

Its subcellular location is the cell inner membrane. F(1)F(0) ATP synthase produces ATP from ADP in the presence of a proton or sodium gradient. F-type ATPases consist of two structural domains, F(1) containing the extramembraneous catalytic core and F(0) containing the membrane proton channel, linked together by a central stalk and a peripheral stalk. During catalysis, ATP synthesis in the catalytic domain of F(1) is coupled via a rotary mechanism of the central stalk subunits to proton translocation. Functionally, component of the F(0) channel, it forms part of the peripheral stalk, linking F(1) to F(0). The polypeptide is ATP synthase subunit b 2 (Albidiferax ferrireducens (strain ATCC BAA-621 / DSM 15236 / T118) (Rhodoferax ferrireducens)).